We begin with the raw amino-acid sequence, 183 residues long: UPF0397 protein EAT1b_2102 (183 aa).

Transmembrane regions (helical) follow at residues 9 to 29 (IVAT…AAIP), 42 to 62 (AFLA…IGLI), 74 to 94 (SPWW…GLIA), 117 to 137 (AVVQ…LIYA), and 147 to 167 (GAVA…LLLV).

This sequence belongs to the UPF0397 family.

The protein localises to the cell membrane. This is UPF0397 protein EAT1b_2102 from Exiguobacterium sp. (strain ATCC BAA-1283 / AT1b).